A 579-amino-acid chain; its full sequence is Sulfite reductase [NADPH] hemoprotein beta-component (579 aa).

Residues Cys434, Cys440, Cys479, and Cys483 each coordinate [4Fe-4S] cluster. Cys483 lines the siroheme pocket.

This sequence belongs to the nitrite and sulfite reductase 4Fe-4S domain family. Alpha(8)-beta(8). The alpha component is a flavoprotein, the beta component is a hemoprotein. It depends on siroheme as a cofactor. [4Fe-4S] cluster is required as a cofactor.

The enzyme catalyses hydrogen sulfide + 3 NADP(+) + 3 H2O = sulfite + 3 NADPH + 4 H(+). It functions in the pathway sulfur metabolism; hydrogen sulfide biosynthesis; hydrogen sulfide from sulfite (NADPH route): step 1/1. Its function is as follows. Component of the sulfite reductase complex that catalyzes the 6-electron reduction of sulfite to sulfide. This is one of several activities required for the biosynthesis of L-cysteine from sulfate. The chain is Sulfite reductase [NADPH] hemoprotein beta-component from Salmonella choleraesuis (strain SC-B67).